An 87-amino-acid polypeptide reads, in one-letter code: Exodeoxyribonuclease 7 small subunit (87 aa).

It belongs to the XseB family. As to quaternary structure, heterooligomer composed of large and small subunits.

The protein resides in the cytoplasm. The catalysed reaction is Exonucleolytic cleavage in either 5'- to 3'- or 3'- to 5'-direction to yield nucleoside 5'-phosphates.. In terms of biological role, bidirectionally degrades single-stranded DNA into large acid-insoluble oligonucleotides, which are then degraded further into small acid-soluble oligonucleotides. The protein is Exodeoxyribonuclease 7 small subunit of Halorhodospira halophila (strain DSM 244 / SL1) (Ectothiorhodospira halophila (strain DSM 244 / SL1)).